The primary structure comprises 335 residues: uncharacterized protein (335 aa).

The N-terminal stretch at 1–21 (MDKKARAHTVIVCLVGALSLA) is a signal peptide. The N-palmitoyl cysteine moiety is linked to residue C22. C22 carries the S-diacylglycerol cysteine lipid modification.

It localises to the cell membrane. This is an uncharacterized protein from Treponema pallidum (strain Nichols).